The sequence spans 892 residues: Alanine--tRNA ligase (892 aa).

Positions 580, 584, 682, and 686 each coordinate Zn(2+).

The protein belongs to the class-II aminoacyl-tRNA synthetase family. It depends on Zn(2+) as a cofactor.

The protein resides in the cytoplasm. The enzyme catalyses tRNA(Ala) + L-alanine + ATP = L-alanyl-tRNA(Ala) + AMP + diphosphate. In terms of biological role, catalyzes the attachment of alanine to tRNA(Ala) in a two-step reaction: alanine is first activated by ATP to form Ala-AMP and then transferred to the acceptor end of tRNA(Ala). Also edits incorrectly charged Ser-tRNA(Ala) and Gly-tRNA(Ala) via its editing domain. The chain is Alanine--tRNA ligase from Salinispora tropica (strain ATCC BAA-916 / DSM 44818 / JCM 13857 / NBRC 105044 / CNB-440).